A 185-amino-acid chain; its full sequence is Large ribosomal subunit protein uL22 (185 aa).

The protein belongs to the universal ribosomal protein uL22 family. Component of the large ribosomal subunit. Mature ribosomes consist of a small (40S) and a large (60S) subunit. The 40S subunit contains about 32 different proteins and 1 molecule of RNA (18S). The 60S subunit contains 45 different proteins and 3 molecules of RNA (25S, 5.8S and 5S).

It is found in the cytoplasm. Component of the ribosome, a large ribonucleoprotein complex responsible for the synthesis of proteins in the cell. The small ribosomal subunit (SSU) binds messenger RNAs (mRNAs) and translates the encoded message by selecting cognate aminoacyl-transfer RNA (tRNA) molecules. The large subunit (LSU) contains the ribosomal catalytic site termed the peptidyl transferase center (PTC), which catalyzes the formation of peptide bonds, thereby polymerizing the amino acids delivered by tRNAs into a polypeptide chain. The nascent polypeptides leave the ribosome through a tunnel in the LSU and interact with protein factors that function in enzymatic processing, targeting, and the membrane insertion of nascent chains at the exit of the ribosomal tunnel. This Candida albicans (strain SC5314 / ATCC MYA-2876) (Yeast) protein is Large ribosomal subunit protein uL22.